The chain runs to 170 residues: NADH-quinone oxidoreductase subunit B (170 aa).

Cys-46, Cys-47, Cys-111, and Cys-141 together coordinate [4Fe-4S] cluster.

The protein belongs to the complex I 20 kDa subunit family. NDH-1 is composed of 14 different subunits. Subunits NuoB, C, D, E, F, and G constitute the peripheral sector of the complex. [4Fe-4S] cluster serves as cofactor.

The protein localises to the cell membrane. The catalysed reaction is a quinone + NADH + 5 H(+)(in) = a quinol + NAD(+) + 4 H(+)(out). NDH-1 shuttles electrons from NADH, via FMN and iron-sulfur (Fe-S) centers, to quinones in the respiratory chain. The immediate electron acceptor for the enzyme in this species is believed to be a menaquinone. Couples the redox reaction to proton translocation (for every two electrons transferred, four hydrogen ions are translocated across the cytoplasmic membrane), and thus conserves the redox energy in a proton gradient. The chain is NADH-quinone oxidoreductase subunit B from Geobacillus thermodenitrificans (strain NG80-2).